The following is a 551-amino-acid chain: MNSTILLAQDAVSEGVGNPILNISVFVVFIIVTMTVVLRVGKSTSESTDFYTGGASFSGTQNGLAIAGDYLSAASFLGIVGAISLNGYDGFLYSIGFFVAWLVALLLVAEPLRNVGRFTMADVLSFRLRQKPVRVAAACGTLAVTLFYLIAQMAGAGSLVSVLLDIHEFKWQAVVVGIVGIVMIAYVLLGGMKGTTYVQMIKAVLLVGGVAIMTVLTFVKVSGGLTTLLNDAVEKHAASDYAATKGYDPTQILEPGLQYGATLTTQLDFISLALALCLGTAGLPHVLMRFYTVPTAKEARKSVTWAIVLIGAFYLMTLVLGYGAAALVGPDRVIAAPGAANAAAPLLAFELGGSIFMALISAVAFATVLAVVAGLAITASAAVGHDIYNAVIRNGQSTEAEQVRVSRITVVVIGLISIVLGILAMTQNVAFLVALAFAVAASANLPTILYSLYWKKFNTTGAVAAIYTGLISALLLIFLSPAVSGNDSAMVPGADWAIFPLKNPGLVSIPLAFIAGWIGTLVGKPDNMDDLAAEMEVRSLTGVGVEKAVDH.

13 consecutive transmembrane segments (helical) span residues 18 to 38 (NPIL…TVVL), 63 to 83 (GLAI…VGAI), 90 to 110 (GFLY…LVAE), 144 to 164 (VTLF…SVLL), 171 to 191 (WQAV…LLGG), 203 to 223 (AVLL…KVSG), 267 to 287 (LDFI…PHVL), 307 to 327 (IVLI…AAAL), 355 to 375 (IFMA…VAGL), 411 to 431 (VVIG…NVAF), 432 to 452 (LVAL…LYSL), 463 to 483 (VAAI…SPAV), and 503 to 523 (NPGL…TLVG).

This sequence belongs to the sodium:solute symporter (SSF) (TC 2.A.21) family.

It is found in the cell membrane. Functionally, acts as a secondary carrier for acetate, propionate and pyruvate. Has high affinity for acetate and propionate and lower affinity for pyruvate. Driven by the electrochemical proton potential. This chain is Monocarboxylic acid transporter, found in Corynebacterium glutamicum (strain ATCC 13032 / DSM 20300 / JCM 1318 / BCRC 11384 / CCUG 27702 / LMG 3730 / NBRC 12168 / NCIMB 10025 / NRRL B-2784 / 534).